Consider the following 476-residue polypeptide: ATP synthase subunit beta, chloroplastic (476 aa).

G156–T163 lines the ATP pocket.

It belongs to the ATPase alpha/beta chains family. In terms of assembly, F-type ATPases have 2 components, CF(1) - the catalytic core - and CF(0) - the membrane proton channel. CF(1) has five subunits: alpha(3), beta(3), gamma(1), delta(1), epsilon(1). CF(0) has four main subunits: a(1), b(1), b'(1) and c(9-12).

Its subcellular location is the plastid. The protein localises to the chloroplast thylakoid membrane. It carries out the reaction ATP + H2O + 4 H(+)(in) = ADP + phosphate + 5 H(+)(out). Produces ATP from ADP in the presence of a proton gradient across the membrane. The catalytic sites are hosted primarily by the beta subunits. The chain is ATP synthase subunit beta, chloroplastic from Fucus vesiculosus (Bladder wrack).